Consider the following 458-residue polypeptide: MYSMEQVVNLAKHRGFVFPGSEIYGGLANTWDYGPLGIELKNNVKKAWWKKFIQESPYNVGLDAAILMNPKTWIASGHVGNFNDPMIDCKKCKARHRADKLIEDALDAKGIEMVVDGLTFDQMADLMKEHEVKCPDCSSEEFTEIRQFNLMFKTFQGVTESSTNEIFLRPETAQGIFVNFKNVQRSMRKKLPFGIGQIGKSFRNEITPGNFTFRTREFEQMELEFFCKPGEDLEWFAFWRETCKNWLLSLGMTEESMRLRDHGEEELSHYSNATTDIEFKFPFGWGELWGVASRTDFDLKRHMEHSNEDFNYIDPQTNERYVPYCIEPSLGADRVTLAFLCDAYEEEQLENDSRTVLRFHPALAPYKAAILPLSKKLSEGATEVFAELAKDFMVDFDETGSIGKRYRRQDEIGTPFCITYDFDSVEDKAVTVRDRDTMEQVRMPISELKGFLEKKIQF.

Arg-97 and Glu-171 together coordinate substrate. ATP-binding positions include 203-205 (RNE), 213-218 (FRTREF), 287-288 (EL), and 331-334 (GADR). 218–222 (FEQME) is a binding site for substrate. 327–331 (EPSLG) is a binding site for substrate.

The protein belongs to the class-II aminoacyl-tRNA synthetase family. In terms of assembly, homodimer.

It localises to the cytoplasm. It catalyses the reaction tRNA(Gly) + glycine + ATP = glycyl-tRNA(Gly) + AMP + diphosphate. Functionally, catalyzes the attachment of glycine to tRNA(Gly). This chain is Glycine--tRNA ligase, found in Bacillus thuringiensis subsp. konkukian (strain 97-27).